Consider the following 476-residue polypeptide: Cysteine--tRNA ligase (476 aa).

C27 lines the Zn(2+) pocket. Residues 29–39 (ITPYDSVHVGH) carry the 'HIGH' region motif. The Zn(2+) site is built by C213, H238, and E242. The short motif at 271–275 (KMSKS) is the 'KMSKS' region element. Residue K274 participates in ATP binding.

The protein belongs to the class-I aminoacyl-tRNA synthetase family. The cofactor is Zn(2+).

Its subcellular location is the cytoplasm. It carries out the reaction tRNA(Cys) + L-cysteine + ATP = L-cysteinyl-tRNA(Cys) + AMP + diphosphate. In Pyrobaculum arsenaticum (strain DSM 13514 / JCM 11321 / PZ6), this protein is Cysteine--tRNA ligase.